Consider the following 476-residue polypeptide: Proline--tRNA ligase 2 (476 aa).

The protein belongs to the class-II aminoacyl-tRNA synthetase family. ProS type 3 subfamily. Homodimer.

The protein localises to the cytoplasm. It carries out the reaction tRNA(Pro) + L-proline + ATP = L-prolyl-tRNA(Pro) + AMP + diphosphate. Functionally, catalyzes the attachment of proline to tRNA(Pro) in a two-step reaction: proline is first activated by ATP to form Pro-AMP and then transferred to the acceptor end of tRNA(Pro). The chain is Proline--tRNA ligase 2 from Bacillus cereus (strain ATCC 14579 / DSM 31 / CCUG 7414 / JCM 2152 / NBRC 15305 / NCIMB 9373 / NCTC 2599 / NRRL B-3711).